The chain runs to 346 residues: Ribonucleoside-diphosphate reductase subunit beta (346 aa).

3 residues coordinate Fe cation: glutamate 89, glutamate 120, and histidine 123. Tyrosine 129 is an active-site residue. Fe cation is bound by residues glutamate 193, glutamate 227, and histidine 230.

Belongs to the ribonucleoside diphosphate reductase small chain family. Tetramer of two alpha and two beta subunits. Fe cation serves as cofactor.

The enzyme catalyses a 2'-deoxyribonucleoside 5'-diphosphate + [thioredoxin]-disulfide + H2O = a ribonucleoside 5'-diphosphate + [thioredoxin]-dithiol. Its function is as follows. Provides the precursors necessary for DNA synthesis. Catalyzes the biosynthesis of deoxyribonucleotides from the corresponding ribonucleotides. In Chlamydia muridarum (strain MoPn / Nigg), this protein is Ribonucleoside-diphosphate reductase subunit beta (nrdB).